Here is a 198-residue protein sequence, read N- to C-terminus: Holliday junction branch migration complex subunit RuvA (198 aa).

The interval 1–64 (MYEYIKGEYM…EDFIGLYGFE (64 aa)) is domain I. The segment at 65–143 (SLEELEMFKM…TDELLNCIDE (79 aa)) is domain II. A flexible linker region spans residues 144–154 (FDDVTQDNSLA). Positions 154 to 198 (AVSEALSALISLGYTEKEAEKVLRDVDKSESVENIIKSALVKLMG) are domain III.

It belongs to the RuvA family. In terms of assembly, homotetramer. Forms an RuvA(8)-RuvB(12)-Holliday junction (HJ) complex. HJ DNA is sandwiched between 2 RuvA tetramers; dsDNA enters through RuvA and exits via RuvB. An RuvB hexamer assembles on each DNA strand where it exits the tetramer. Each RuvB hexamer is contacted by two RuvA subunits (via domain III) on 2 adjacent RuvB subunits; this complex drives branch migration. In the full resolvosome a probable DNA-RuvA(4)-RuvB(12)-RuvC(2) complex forms which resolves the HJ.

Its subcellular location is the cytoplasm. The RuvA-RuvB-RuvC complex processes Holliday junction (HJ) DNA during genetic recombination and DNA repair, while the RuvA-RuvB complex plays an important role in the rescue of blocked DNA replication forks via replication fork reversal (RFR). RuvA specifically binds to HJ cruciform DNA, conferring on it an open structure. The RuvB hexamer acts as an ATP-dependent pump, pulling dsDNA into and through the RuvAB complex. HJ branch migration allows RuvC to scan DNA until it finds its consensus sequence, where it cleaves and resolves the cruciform DNA. The polypeptide is Holliday junction branch migration complex subunit RuvA (Clostridium botulinum (strain Eklund 17B / Type B)).